The sequence spans 554 residues: Hydroxylamine reductase (554 aa).

4 residues coordinate [2Fe-2S] cluster: C3, C6, C18, and C25. The hybrid [4Fe-2O-2S] cluster site is built by H252, E276, C320, C408, C436, C461, E495, and K497. C408 is modified (cysteine persulfide).

The protein belongs to the HCP family. [2Fe-2S] cluster serves as cofactor. Requires hybrid [4Fe-2O-2S] cluster as cofactor.

The protein localises to the cytoplasm. The enzyme catalyses A + NH4(+) + H2O = hydroxylamine + AH2 + H(+). In terms of biological role, catalyzes the reduction of hydroxylamine to form NH(3) and H(2)O. This Photobacterium profundum (strain SS9) protein is Hydroxylamine reductase.